The primary structure comprises 143 residues: Myosin 1 light chain cam2 (143 aa).

EF-hand domains are found at residues 6–41, 75–110, and 111–143; these read EQTD…LGIN, ESEE…LGEK, and LSDN…IMAK.

This sequence belongs to the calmodulin family. As to quaternary structure, interacts with myo1 and pik1.

It is found in the cytoplasm. Its subcellular location is the prospore membrane. In terms of biological role, plays a role in meiosis and sporulation. The chain is Myosin 1 light chain cam2 from Schizosaccharomyces pombe (strain 972 / ATCC 24843) (Fission yeast).